The chain runs to 374 residues: MKKKVLFIDRDGTLVIEPPVDYQLDSLEKLEFYPKVFRNLGFIRSKLDFEFVMVTNQDGLGTSSFPEETFWPAHNLMLKTLAGEGITFDDILIDRSMPEDCASTRKPRTGMLTKYISNPEYDLEGSFVIGDRPTDVELAKNIGCRAIYLQESIDLLKEKGLETYCALATTDWDRVAEFLFAGERRAEIRRTTKETDILVALNLDGKGTCDISTGLGFFDHMLEQIGKHSGMDLTIRVKGDLEVDEHHTIEDTAIALGECIYQALGSKRGIERYGYALPMDDCLCRVCLDFGGRPWLVWDAEFKREKIGEMPTEMFLHFFKSLSDAAKMNLNIKAEGQNEHHKIEGIFKALARALKMALKRDIYHFELPSSKGVL.

The histidinol-phosphatase stretch occupies residues 1–183 (MKKKVLFIDR…RVAEFLFAGE (183 aa)). Asp-9 acts as the Nucleophile in catalysis. 3 residues coordinate Mg(2+): Asp-9, Asp-11, and Asp-131. The active-site Proton donor is the Asp-11. Residues 184 to 374 (RRAEIRRTTK…FELPSSKGVL (191 aa)) form an imidazoleglycerol-phosphate dehydratase region.

This sequence in the N-terminal section; belongs to the histidinol-phosphatase family. In the C-terminal section; belongs to the imidazoleglycerol-phosphate dehydratase family. The cofactor is Mg(2+).

It is found in the cytoplasm. It catalyses the reaction D-erythro-1-(imidazol-4-yl)glycerol 3-phosphate = 3-(imidazol-4-yl)-2-oxopropyl phosphate + H2O. The enzyme catalyses L-histidinol phosphate + H2O = L-histidinol + phosphate. Its pathway is amino-acid biosynthesis; L-histidine biosynthesis; L-histidine from 5-phospho-alpha-D-ribose 1-diphosphate: step 6/9. It participates in amino-acid biosynthesis; L-histidine biosynthesis; L-histidine from 5-phospho-alpha-D-ribose 1-diphosphate: step 8/9. The protein is Histidine biosynthesis bifunctional protein HisB of Bacteroides fragilis (strain ATCC 25285 / DSM 2151 / CCUG 4856 / JCM 11019 / LMG 10263 / NCTC 9343 / Onslow / VPI 2553 / EN-2).